Here is a 567-residue protein sequence, read N- to C-terminus: Proline--tRNA ligase (567 aa).

Belongs to the class-II aminoacyl-tRNA synthetase family. ProS type 1 subfamily. In terms of assembly, homodimer.

The protein localises to the cytoplasm. The enzyme catalyses tRNA(Pro) + L-proline + ATP = L-prolyl-tRNA(Pro) + AMP + diphosphate. Catalyzes the attachment of proline to tRNA(Pro) in a two-step reaction: proline is first activated by ATP to form Pro-AMP and then transferred to the acceptor end of tRNA(Pro). As ProRS can inadvertently accommodate and process non-cognate amino acids such as alanine and cysteine, to avoid such errors it has two additional distinct editing activities against alanine. One activity is designated as 'pretransfer' editing and involves the tRNA(Pro)-independent hydrolysis of activated Ala-AMP. The other activity is designated 'posttransfer' editing and involves deacylation of mischarged Ala-tRNA(Pro). The misacylated Cys-tRNA(Pro) is not edited by ProRS. This chain is Proline--tRNA ligase, found in Fusobacterium nucleatum subsp. nucleatum (strain ATCC 25586 / DSM 15643 / BCRC 10681 / CIP 101130 / JCM 8532 / KCTC 2640 / LMG 13131 / VPI 4355).